Here is a 94-residue protein sequence, read N- to C-terminus: Late cornified envelope-like proline-rich protein 1 (94 aa).

2 disordered regions span residues 1–26 and 47–94; these read MSSDDKSKSNDPKTEPKNCDPKCEQK and CPRE…PPPE. Residues 53-94 are compositionally biased toward pro residues; that stretch reads PAPPKCPPCPSPSPSSCPPKPCAKPCPPKCPSSCPPPCPPPE.

It belongs to the cornifin (SPRR) family.

The protein is Late cornified envelope-like proline-rich protein 1 (LELP1) of Macaca fascicularis (Crab-eating macaque).